The sequence spans 275 residues: NH(3)-dependent NAD(+) synthetase (275 aa).

50-57 (GISGGVDS) is a binding site for ATP. D56 provides a ligand contact to Mg(2+). R147 provides a ligand contact to deamido-NAD(+). T167 contacts ATP. Position 172 (E172) interacts with Mg(2+). Deamido-NAD(+) is bound by residues K180 and D187. K196 and T218 together coordinate ATP. 267–268 (HK) contacts deamido-NAD(+).

Belongs to the NAD synthetase family. In terms of assembly, homodimer.

It carries out the reaction deamido-NAD(+) + NH4(+) + ATP = AMP + diphosphate + NAD(+) + H(+). It functions in the pathway cofactor biosynthesis; NAD(+) biosynthesis; NAD(+) from deamido-NAD(+) (ammonia route): step 1/1. Functionally, catalyzes the ATP-dependent amidation of deamido-NAD to form NAD. Uses ammonia as a nitrogen source. The sequence is that of NH(3)-dependent NAD(+) synthetase from Pseudomonas putida (strain ATCC 47054 / DSM 6125 / CFBP 8728 / NCIMB 11950 / KT2440).